The following is a 349-amino-acid chain: Anthranilate phosphoribosyltransferase (349 aa).

Residues glycine 82, 85–86 (GD), 92–95 (NVST), 110–118 (KHGNRAVSG), and serine 122 contribute to the 5-phospho-alpha-D-ribose 1-diphosphate site. Glycine 82 serves as a coordination point for anthranilate. Serine 94 is a Mg(2+) binding site. Asparagine 113 contributes to the anthranilate binding site. Arginine 168 contacts anthranilate. Mg(2+)-binding residues include aspartate 227 and glutamate 228.

Belongs to the anthranilate phosphoribosyltransferase family. In terms of assembly, homodimer. Requires Mg(2+) as cofactor.

It carries out the reaction N-(5-phospho-beta-D-ribosyl)anthranilate + diphosphate = 5-phospho-alpha-D-ribose 1-diphosphate + anthranilate. It participates in amino-acid biosynthesis; L-tryptophan biosynthesis; L-tryptophan from chorismate: step 2/5. Its function is as follows. Catalyzes the transfer of the phosphoribosyl group of 5-phosphorylribose-1-pyrophosphate (PRPP) to anthranilate to yield N-(5'-phosphoribosyl)-anthranilate (PRA). This is Anthranilate phosphoribosyltransferase from Pseudomonas fluorescens (strain Pf0-1).